The chain runs to 498 residues: MRINPTTSGPGVSTLEKKNLGRIAQIIGPVLDVAFPPGKMPNIYNALVVKGRDTVGQQINVTCEVQQLLGNNRVRAVAMSATDGLMRGMEVIDTGAPLSVPVGGATLGRIFNVLGEPVDNLGPVDTRTTSPIHRSAPAFIQLDTKLSIFETGIKVVDLLAPYRRGGKIGLFGGAGVGKTVLIMELINNIAKAHGGVSVFGGVGERTREGNDLYMEMKESGVINEKNISESKVALVYGQMNEPPGARMRVGLTALTMAEYFRDVNEQDVLLFIDNIFRFVQAGSEVSALLGRMPSAVGYQPTLSTEMGTLQERITSTKEGSITSIQAVYVPADDLTDPAPATTFAHLDATTVLSRGLAAKGIYPAVDPLDSTSTMLQPRIVGEEHYETAQRVKQTLQRYKELQDIIAILGLDELSEEDRLTVARARKIERFLSQPFFVAEVFTGSPGKYVGLAETIRGFQLILSGELDGLPEQAFYLVGNIDEATAKAMNLEMESKLKK.

Position 172-179 (172-179 (GGAGVGKT)) interacts with ATP.

The protein belongs to the ATPase alpha/beta chains family. In terms of assembly, F-type ATPases have 2 components, CF(1) - the catalytic core - and CF(0) - the membrane proton channel. CF(1) has five subunits: alpha(3), beta(3), gamma(1), delta(1), epsilon(1). CF(0) has four main subunits: a(1), b(1), b'(1) and c(9-12).

The protein resides in the plastid. The protein localises to the chloroplast thylakoid membrane. The catalysed reaction is ATP + H2O + 4 H(+)(in) = ADP + phosphate + 5 H(+)(out). Produces ATP from ADP in the presence of a proton gradient across the membrane. The catalytic sites are hosted primarily by the beta subunits. The chain is ATP synthase subunit beta, chloroplastic from Vitis vinifera (Grape).